Here is a 307-residue protein sequence, read N- to C-terminus: MNDLSTMSSLTKEEILQLIEEATALKKGKQELGLAGEFVANLFFEPSTRTRFSFEVAEKKLGMNVLSLDAASTSVQKGETLYDTVKTLESIGVKACVIRDSTDEYYNELIGKVGIPIINAGDGCGQHPTQSLLDLMTIYEEFGGFEGLTISIHGDIKHSRVARSNAEVLSRLGATVLFSGPASFQDEQNPHGTYVQVDEAIKQSDVVMLLRIQHERHTEKMGNEDYLSTYGLTVNRAKNMKERAIIMHPAPVNRGVEIDDSLVESKQSRIFKQMENGVYVRMAVLKRAFQNSKLHQKGRESVYVVSH.

Carbamoyl phosphate-binding residues include Arg-49 and Thr-50. Lys-77 is a binding site for L-aspartate. Carbamoyl phosphate-binding residues include Arg-99, His-127, and Gln-130. 2 residues coordinate L-aspartate: Arg-160 and Arg-211. Carbamoyl phosphate is bound by residues Ala-250 and Pro-251.

The protein belongs to the aspartate/ornithine carbamoyltransferase superfamily. ATCase family. As to quaternary structure, heterododecamer (2C3:3R2) of six catalytic PyrB chains organized as two trimers (C3), and six regulatory PyrI chains organized as three dimers (R2).

The enzyme catalyses carbamoyl phosphate + L-aspartate = N-carbamoyl-L-aspartate + phosphate + H(+). Its pathway is pyrimidine metabolism; UMP biosynthesis via de novo pathway; (S)-dihydroorotate from bicarbonate: step 2/3. Catalyzes the condensation of carbamoyl phosphate and aspartate to form carbamoyl aspartate and inorganic phosphate, the committed step in the de novo pyrimidine nucleotide biosynthesis pathway. This is Aspartate carbamoyltransferase catalytic subunit from Bacillus pumilus (strain SAFR-032).